An 87-amino-acid polypeptide reads, in one-letter code: uncharacterized protein (87 aa).

Residues 42-62 traverse the membrane as a helical segment; sequence LADALYSAGSAAFTIAASLVA.

The protein belongs to the SPP1 holin family.

It is found in the membrane. This is an uncharacterized protein from Bacillus licheniformis.